Reading from the N-terminus, the 129-residue chain is Histone H2A.J (129 aa).

Residues 1–22 form a disordered region; sequence MSGRGKQGGKVRAKAKSRSSRA. N6-acetyllysine occurs at positions 6 and 10. Over residues 7–19 the composition is skewed to basic residues; sequence QGGKVRAKAKSRS. K10 carries the post-translational modification N6-lactoyllysine; alternate. Position 105 is an N5-methylglutamine (Q105). The residue at position 121 (T121) is a Phosphothreonine; by DCAF1.

Belongs to the histone H2A family. As to quaternary structure, the nucleosome is a histone octamer containing two molecules each of H2A, H2B, H3 and H4 assembled in one H3-H4 heterotetramer and two H2A-H2B heterodimers. The octamer wraps approximately 147 bp of DNA. Monoubiquitination of Lys-120 (H2AXK119ub) gives a specific tag for epigenetic transcriptional repression. Following DNA double-strand breaks (DSBs), it is ubiquitinated through 'Lys-63' linkage of ubiquitin moieties. In terms of processing, glutamine methylation at Gln-105 (H2AQ104me) by FBL is specifically dedicated to polymerase I. It is present at 35S ribosomal DNA locus and impairs binding of the FACT complex. Post-translationally, phosphorylation on Ser-2 (H2AS1ph) is enhanced during mitosis. Phosphorylation on Ser-2 by RPS6KA5/MSK1 directly represses transcription. Acetylation of H3 inhibits Ser-2 phosphorylation by RPS6KA5/MSK1. Phosphorylation at Thr-121 (H2AT120ph) by DCAF1 is present in the regulatory region of many tumor suppresor genes and down-regulates their transcription.

Its subcellular location is the nucleus. It localises to the chromosome. In terms of biological role, core component of nucleosome. Nucleosomes wrap and compact DNA into chromatin, limiting DNA accessibility to the cellular machineries which require DNA as a template. Histones thereby play a central role in transcription regulation, DNA repair, DNA replication and chromosomal stability. DNA accessibility is regulated via a complex set of post-translational modifications of histones, also called histone code, and nucleosome remodeling. The chain is Histone H2A.J from Macaca fascicularis (Crab-eating macaque).